Here is a 640-residue protein sequence, read N- to C-terminus: DNA mismatch repair protein MutL (640 aa).

Positions T343–P389 are disordered. A compositionally biased stretch (basic and acidic residues) spans Q350–H373.

It belongs to the DNA mismatch repair MutL/HexB family.

This protein is involved in the repair of mismatches in DNA. It is required for dam-dependent methyl-directed DNA mismatch repair. May act as a 'molecular matchmaker', a protein that promotes the formation of a stable complex between two or more DNA-binding proteins in an ATP-dependent manner without itself being part of a final effector complex. The sequence is that of DNA mismatch repair protein MutL from Desulforamulus reducens (strain ATCC BAA-1160 / DSM 100696 / MI-1) (Desulfotomaculum reducens).